The primary structure comprises 172 residues: Shikimate kinase (172 aa).

11–16 lines the ATP pocket; sequence GAGKST. Ser-15 contributes to the Mg(2+) binding site. Positions 33, 57, and 79 each coordinate substrate. Arg-117 contacts ATP. Arg-136 contributes to the substrate binding site. Arg-153 contacts ATP.

Belongs to the shikimate kinase family. Monomer. Mg(2+) serves as cofactor.

Its subcellular location is the cytoplasm. The catalysed reaction is shikimate + ATP = 3-phosphoshikimate + ADP + H(+). Its pathway is metabolic intermediate biosynthesis; chorismate biosynthesis; chorismate from D-erythrose 4-phosphate and phosphoenolpyruvate: step 5/7. Functionally, catalyzes the specific phosphorylation of the 3-hydroxyl group of shikimic acid using ATP as a cosubstrate. This is Shikimate kinase from Pseudomonas paraeruginosa (strain DSM 24068 / PA7) (Pseudomonas aeruginosa (strain PA7)).